Reading from the N-terminus, the 454-residue chain is Mitochondrial dynamics protein MID49 (454 aa).

The Mitochondrial intermembrane portion of the chain corresponds to 1 to 22 (MAEFSQKRGKRRGDEGLGSMVD). A helical transmembrane segment spans residues 23-43 (FLLANARLVLGVGGAAVLGIA). Residues 44-454 (TLAVKRFIDR…SGLQEPEGLL (411 aa)) lie on the Cytoplasmic side of the membrane. Residues 76 to 119 (ATPHLQPRPPPAALSQPVLPLAPSSSAPEGPAKSDPEVTPQLSS) are disordered. Residues 88–108 (ALSQPVLPLAPSSSAPEGPAK) are compositionally biased toward low complexity.

The protein belongs to the MID49/MID51 family. In terms of assembly, interacts with DNM1L.

The protein localises to the mitochondrion outer membrane. Its function is as follows. Mitochondrial outer membrane protein which regulates mitochondrial organization. It is required for mitochondrial fission and promotes the recruitment and association of the fission mediator dynamin-related protein 1 (DNM1L) to the mitochondrial surface independently of the mitochondrial fission FIS1 and MFF proteins. Regulates DNM1L GTPase activity. The chain is Mitochondrial dynamics protein MID49 (MIEF2) from Pongo abelii (Sumatran orangutan).